Here is a 573-residue protein sequence, read N- to C-terminus: MSKEESGHVTPEKGDNVVDYQASTTVLPSEGPERDANWFTRNGLNVDSFKKKHYGPGMVELERPMKARHLHMIAIGGSIGAGFFVGSGGALAKGGPGSLFVDFLIIGIMMFNVVYALGELAIMYPVSGSFYTYSARFIDPAWGFAMGWNYVLQWAAVLPLELTVCGITISYWNSEITTAAWISLFLGVIIIINLFGALGYAEEEFWASCFKLAATVIFMIIAFVLVLGGGPKDGRYHEYWGARYWYDPGAFKNGFKGFCSVFVTAAFSFSGTELVGLAAAESTNPTKNMPGAIKQVFWRITIFYILGLFFVGLLINSDDPALLSSAAYADSKASPFVLVGKYAGLKGFDHFMNLVILASVLSIGVSGVYGGSRTLTALAQQGYAPKLFTYIDKSGRPLPSVIFLILFGFIAYVSLDATGPVVFDWLLAISGLAALFTWGSVCLAHIRFRKAWKYHGHTLDEIPFKAAGGVYGSYLGLFICVIVLMAQFYTAIAAPPGSPGVGTAEDFFKQYLAAPVVLGFWIVGWLWKRQPFLRTKNIDVDTGLREFDWDEINAERTRIAPLPAWRRIIHHTF.

The next 11 helical transmembrane spans lie at 72–92 (MIAI…GALA), 99–117 (LFVD…VYAL), 176–200 (ITTA…ALGY), 212–229 (LAAT…VLGG), 257–280 (GFCS…LAAA), 296–315 (VFWR…GLLI), 351–371 (FMNL…VYGG), 398–415 (LPSV…YVSL), 425–444 (WLLA…VCLA), 470–494 (VYGS…AIAA), and 511–527 (YLAA…GWLW).

Belongs to the amino acid-polyamine-organocation (APC) superfamily.

Its subcellular location is the membrane. The protein is Amino-acid permease inda1 (inda1) of Hypocrea atroviridis (Trichoderma atroviride).